The following is a 566-amino-acid chain: Phenylalanine--tRNA ligase beta subunit (566 aa).

The region spanning 287–362 is the B5 domain; sequence YFQEEVEFDV…IGEGLASFYP (76 aa). Residues Asp340, Asp346, Glu349, and Asp350 each contribute to the Mg(2+) site.

This sequence belongs to the phenylalanyl-tRNA synthetase beta subunit family. Type 2 subfamily. In terms of assembly, tetramer of two alpha and two beta subunits. Mg(2+) is required as a cofactor.

Its subcellular location is the cytoplasm. The enzyme catalyses tRNA(Phe) + L-phenylalanine + ATP = L-phenylalanyl-tRNA(Phe) + AMP + diphosphate + H(+). This chain is Phenylalanine--tRNA ligase beta subunit, found in Borrelia garinii subsp. bavariensis (strain ATCC BAA-2496 / DSM 23469 / PBi) (Borreliella bavariensis).